The primary structure comprises 388 residues: Succinate--CoA ligase [ADP-forming] subunit beta (388 aa).

The region spanning 9-244 is the ATP-grasp domain; it reads KQLFAEYGLP…PSQEDEREAH (236 aa). ATP is bound by residues K46, 53–55, E99, T102, and E107; that span reads GRG. N199 and D213 together coordinate Mg(2+). Substrate contacts are provided by residues N264 and 321 to 323; that span reads GIV.

The protein belongs to the succinate/malate CoA ligase beta subunit family. In terms of assembly, heterotetramer of two alpha and two beta subunits. It depends on Mg(2+) as a cofactor.

It catalyses the reaction succinate + ATP + CoA = succinyl-CoA + ADP + phosphate. It carries out the reaction GTP + succinate + CoA = succinyl-CoA + GDP + phosphate. It participates in carbohydrate metabolism; tricarboxylic acid cycle; succinate from succinyl-CoA (ligase route): step 1/1. Functionally, succinyl-CoA synthetase functions in the citric acid cycle (TCA), coupling the hydrolysis of succinyl-CoA to the synthesis of either ATP or GTP and thus represents the only step of substrate-level phosphorylation in the TCA. The beta subunit provides nucleotide specificity of the enzyme and binds the substrate succinate, while the binding sites for coenzyme A and phosphate are found in the alpha subunit. This chain is Succinate--CoA ligase [ADP-forming] subunit beta, found in Marinomonas sp. (strain MWYL1).